Reading from the N-terminus, the 366-residue chain is G kinase-anchoring protein 1 (366 aa).

Positions 1–95 (MASAVLSSVL…SHSVCNVQHE (95 aa)) are interaction with IRS1. Residues 20-105 (QVDSGSGSDS…LSLPNPVQKE (86 aa)) form a disordered region. Residues Ser-23, Ser-25, and Ser-27 each carry the phosphoserine modification. Positions 39–50 (NGKSQTLGNKST) are enriched in polar residues. A coiled-coil region spans residues 46-77 (GNKSTANEKKREKRRKKKEQQQSEANELRNLA). Ser-106 is modified (phosphoserine; by PKG). 3 coiled-coil regions span residues 129–160 (DLEKALLLSKLEYEEHRQDYENAENASTQTKV), 250–299 (LKDG…MLQE), and 326–353 (VSSLHAALEQERSKVKVLQAELAKYQGG).

It belongs to the GKAP1 family. As to quaternary structure, interacts with PRKG1 and IRS1.

Its subcellular location is the golgi apparatus. In terms of biological role, regulates insulin-dependent IRS1 tyrosine phosphorylation in adipocytes by modulating the availability of IRS1 to IR tyrosine kinase. Its association with IRS1 is required for insulin-induced translocation of SLC2A4 to the cell membrane. Involved in TNF-induced impairment of insulin-dependent IRS1 tyrosine phosphorylation. This Rattus norvegicus (Rat) protein is G kinase-anchoring protein 1 (Gkap1).